A 424-amino-acid polypeptide reads, in one-letter code: MSNTQSFFSQPLAERDALVRGALSKELERQQSQVELIASENIVSRAVLEAQGSVLTNKYAEGYPGKRYYGGCKFADEVESLAIERVKQLFNAGFANVQPHSGAQANGSVMLALTKPGDTVLGMSLDAGGHLTHGAKPALSGKWFNAVQYGVNRESMLIDYDQVEALAKEHKPSLIIAGFSAYPRQLDFARFRAIADSVGAKLMVDMAHIAGVIAAGRHSNPVDYAHVVTSTTHKTLRGPRGGFVLTNHEEIAKKINSAVFPGLQGGPLMHVIAAKAVAFGEAMTSDFRTYIDNVLANAKALGEVLKEGGVDLVTGGTDNHLLLVDLRPKGLKGTQVEQALERAGITCNKNGIPFDTEKPTITSGIRLGAPAATTRGFGVAEFREIGRLILEVFEALRANPEGDAVTEQRVRQQIFALCDRFPIY.

(6S)-5,6,7,8-tetrahydrofolate is bound by residues Leu125 and 129 to 131 (GHL). Lys234 carries the N6-(pyridoxal phosphate)lysine modification. Glu250 contributes to the (6S)-5,6,7,8-tetrahydrofolate binding site.

This sequence belongs to the SHMT family. In terms of assembly, homodimer. It depends on pyridoxal 5'-phosphate as a cofactor.

Its subcellular location is the cytoplasm. The enzyme catalyses (6R)-5,10-methylene-5,6,7,8-tetrahydrofolate + glycine + H2O = (6S)-5,6,7,8-tetrahydrofolate + L-serine. Its pathway is one-carbon metabolism; tetrahydrofolate interconversion. It participates in amino-acid biosynthesis; glycine biosynthesis; glycine from L-serine: step 1/1. In terms of biological role, catalyzes the reversible interconversion of serine and glycine with tetrahydrofolate (THF) serving as the one-carbon carrier. This reaction serves as the major source of one-carbon groups required for the biosynthesis of purines, thymidylate, methionine, and other important biomolecules. Also exhibits THF-independent aldolase activity toward beta-hydroxyamino acids, producing glycine and aldehydes, via a retro-aldol mechanism. This chain is Serine hydroxymethyltransferase 2, found in Cupriavidus pinatubonensis (strain JMP 134 / LMG 1197) (Cupriavidus necator (strain JMP 134)).